Here is a 434-residue protein sequence, read N- to C-terminus: Ribonuclease T2-like (434 aa).

A signal peptide spans 1 to 18; sequence MLLKNLHSLLQLPIFSNG. Cystine bridges form between C27/C46, C35/C94, C45/C171, C102/C163, and C241/C277. N37 and N70 each carry an N-linked (GlcNAc...) asparagine glycan. The active site involves H87. N-linked (GlcNAc...) asparagine glycans are attached at residues N103 and N123. Residues E156 and H160 contribute to the active site.

This sequence belongs to the RNase T2 family. Post-translationally, N-glycosylated.

Its subcellular location is the vacuole lumen. It localises to the cytoplasm. It catalyses the reaction a ribonucleotidyl-ribonucleotide-RNA + H2O = a 3'-end 3'-phospho-ribonucleotide-RNA + a 5'-end dephospho-ribonucleoside-RNA + H(+). In terms of biological role, rnase which modulates cell survival under stress conditions. Released from the vacuole to the cytoplasm during stress to promote tRNA and rRNA cleavage and to activate separately a downstream pathway that promotes cell death. Involved in cell size, vacuolar morphology and growth at high temperatures and high salt concentration. This is Ribonuclease T2-like (RNY1) from Saccharomyces cerevisiae (strain ATCC 204508 / S288c) (Baker's yeast).